The sequence spans 129 residues: Probable cytochrome b5 2 (129 aa).

A Cytochrome b5 heme-binding domain is found at 3–79 (EKTITVEEVL…LEKFYIGNLL (77 aa)). His38 and His62 together coordinate heme. Residues 105–125 (VKPAMWLFVLVMVVAYFAFRK) form a helical membrane-spanning segment.

It belongs to the cytochrome b5 family.

It is found in the endoplasmic reticulum membrane. The protein resides in the microsome membrane. Its subcellular location is the mitochondrion. Its function is as follows. Membrane bound hemoprotein which function as an electron carrier for several membrane bound oxygenases. This is Probable cytochrome b5 2 (oca8) from Schizosaccharomyces pombe (strain 972 / ATCC 24843) (Fission yeast).